The following is a 371-amino-acid chain: Neuropeptide S receptor (371 aa).

Residues 1-52 (MPANLTEGSFHANQTVPMLDSSPVACTEIVTFTEALVAEEWGSFYSSFKTEQ) are Extracellular-facing. N-linked (GlcNAc...) asparagine glycosylation is found at N4 and N13. Residues 53 to 73 (LITLWVLFVVTIVGNSVVLFS) form a helical membrane-spanning segment. Residues 74-82 (TCRRKRKSR) lie on the Cytoplasmic side of the membrane. The helical transmembrane segment at 83–103 (MTFFVTQLAITDSFTGLINIL) threads the bilayer. Topologically, residues 104–123 (TDIIWRFTGDFMAPDLVCRV) are extracellular. C121 and C197 form a disulfide bridge. The helical transmembrane segment at 124 to 144 (VRYLQVVLLYASTYVLVSLSI) threads the bilayer. Residues 145–164 (DRYHAIVYPMKFLQGEKQAK) are Cytoplasmic-facing. Residues 165–185 (VLIGIAWSLSFLFSIPTLIIF) traverse the membrane as a helical segment. Residues 186–212 (GKRTLSNGEVQCWALWPDDSYWTPYMT) lie on the Extracellular side of the membrane. Residues 213-233 (IVAFLVYFIPLAIISVIYGLV) form a helical membrane-spanning segment. Over 234-275 (IRTIWMKSKTHETVISNCSDGKLCCSYNRGLISKAKIKAIKY) the chain is Cytoplasmic. A helical membrane pass occupies residues 276–296 (SIVIILAFICCWSPYFLFDIL). The Extracellular segment spans residues 297–312 (DNFNVLPDTKERFYAS). Residues 313-333 (VIIQNLPALNSAINPLIYCIF) traverse the membrane as a helical segment. The Cytoplasmic segment spans residues 334–371 (SSSICSPCKMQRSQDSRMTYRERSERHEMQILSKPEFI).

This sequence belongs to the G-protein coupled receptor 1 family. Vasopressin/oxytocin receptor subfamily.

It is found in the cell membrane. Functionally, G-protein coupled receptor for neuropeptide S (NPS). Promotes mobilization of intracellular Ca(2+) stores. Inhibits cell growth in response to NPS binding. Involved in pathogenesis of asthma and other IgE-mediated diseases. The protein is Neuropeptide S receptor (Npsr1) of Mus musculus (Mouse).